The chain runs to 261 residues: Triosephosphate isomerase (261 aa).

10-12 provides a ligand contact to substrate; that stretch reads NWK. His-100 acts as the Electrophile in catalysis. The Proton acceptor role is filled by Glu-172. Residues Gly-178, Ser-218, and 239–240 each bind substrate; that span reads GG.

It belongs to the triosephosphate isomerase family. As to quaternary structure, homodimer.

The protein resides in the cytoplasm. It catalyses the reaction D-glyceraldehyde 3-phosphate = dihydroxyacetone phosphate. The protein operates within carbohydrate biosynthesis; gluconeogenesis. It participates in carbohydrate degradation; glycolysis; D-glyceraldehyde 3-phosphate from glycerone phosphate: step 1/1. Involved in the gluconeogenesis. Catalyzes stereospecifically the conversion of dihydroxyacetone phosphate (DHAP) to D-glyceraldehyde-3-phosphate (G3P). This is Triosephosphate isomerase from Nocardia farcinica (strain IFM 10152).